The following is a 273-amino-acid chain: Large ribosomal subunit protein uL2 (273 aa).

2 disordered regions span residues 28-54 (KPYA…TRHI) and 221-273 (RGTA…RRTK). Positions 39–48 (KSGGRNNNGR) are enriched in low complexity.

This sequence belongs to the universal ribosomal protein uL2 family. As to quaternary structure, part of the 50S ribosomal subunit. Forms a bridge to the 30S subunit in the 70S ribosome.

Functionally, one of the primary rRNA binding proteins. Required for association of the 30S and 50S subunits to form the 70S ribosome, for tRNA binding and peptide bond formation. It has been suggested to have peptidyltransferase activity; this is somewhat controversial. Makes several contacts with the 16S rRNA in the 70S ribosome. The polypeptide is Large ribosomal subunit protein uL2 (Pectobacterium carotovorum subsp. carotovorum (strain PC1)).